Reading from the N-terminus, the 83-residue chain is Small cysteine-rich protein 3 (83 aa).

The N-terminal stretch at 1–21 is a signal peptide; it reads MGVKLNICLLLLLVAIISSQG. Positions 22-39 are excised as a propeptide; that stretch reads FNLRKKEDSKDEKPFGNY. Over residues 25 to 35 the composition is skewed to basic and acidic residues; sequence RKKEDSKDEKP. Positions 25–44 are disordered; the sequence is RKKEDSKDEKPFGNYRRGSP.

It belongs to the Cnidaria small cysteine-rich protein (SCRiP) family. alpha subfamily. Contains 4 disulfide bonds.

Its subcellular location is the secreted. It localises to the nematocyst. Its function is as follows. This recombinant protein induces severe neurotoxicity on zebrafish larvae (Danio rerio) at a concentration of 230 mg/ml, but does not show toxicity when injected in blowfly larvae (Sarcophaga falculata). All fish incubated with this protein died within 16 hours of exposure. Has also been claimed to be implied in calcification, but this function seems improbable. In Acropora millepora (Staghorn coral), this protein is Small cysteine-rich protein 3.